The primary structure comprises 438 residues: Keratin, type I cytoskeletal 13 (438 aa).

Residues 1-95 (MSCRFQSSSM…SVDGGLLSGN (95 aa)) are head. An omega-N-methylarginine mark is found at Arg27 and Arg35. Positions 96–131 (EKITMQNLNDRLASYLEKVRALEAANADLEVKIRDW) are coil. The IF rod domain maps to 96 to 408 (EKITMQNLND…SLLEGQDAKM (313 aa)). A linker 1 region spans residues 132 to 150 (HLKQSPTSPERDYSAYYKT). A coil 1B region spans residues 151–242 (IEELRIKILE…KNHEEEMKEF (92 aa)). Residues 243 to 265 (SNQAVGQVNVEMDATPGIDLTRV) form a linker 12 region. The interval 266-404 (LAEMREQYEA…ATYRSLLEGQ (139 aa)) is coil 2. The tract at residues 405-438 (DAKMTGFNTGGNSTTTSNTSTSPSTSGRPDFRKY) is tail. Positions 408 to 438 (MTGFNTGGNSTTTSNTSTSPSTSGRPDFRKY) are disordered. The span at 409-431 (TGFNTGGNSTTTSNTSTSPSTSG) shows a compositional bias: low complexity.

Belongs to the intermediate filament family. In terms of assembly, heterotetramer of two type I and two type II keratins. In terms of processing, O-glycosylated; glycans consist of single N-acetylglucosamine residues.

Its function is as follows. Type 1 keratin. Maintains postnatal tongue mucosal cell homeostasis and tissue organization in response to mechanical stress, potentially via regulation of the G1/S phase cyclins CCNE1 and CCNE2. This Rattus norvegicus (Rat) protein is Keratin, type I cytoskeletal 13.